Reading from the N-terminus, the 279-residue chain is 4-diphosphocytidyl-2-C-methyl-D-erythritol kinase (279 aa).

Residue lysine 10 is part of the active site. 91-101 (PVASGIGGGSA) serves as a coordination point for ATP. Aspartate 130 is an active-site residue.

This sequence belongs to the GHMP kinase family. IspE subfamily.

The catalysed reaction is 4-CDP-2-C-methyl-D-erythritol + ATP = 4-CDP-2-C-methyl-D-erythritol 2-phosphate + ADP + H(+). The protein operates within isoprenoid biosynthesis; isopentenyl diphosphate biosynthesis via DXP pathway; isopentenyl diphosphate from 1-deoxy-D-xylulose 5-phosphate: step 3/6. Functionally, catalyzes the phosphorylation of the position 2 hydroxy group of 4-diphosphocytidyl-2C-methyl-D-erythritol. This is 4-diphosphocytidyl-2-C-methyl-D-erythritol kinase from Ruegeria pomeroyi (strain ATCC 700808 / DSM 15171 / DSS-3) (Silicibacter pomeroyi).